Here is a 196-residue protein sequence, read N- to C-terminus: ATP-dependent Clp protease proteolytic subunit (196 aa).

The active-site Nucleophile is Ser-96. His-121 is an active-site residue.

This sequence belongs to the peptidase S14 family. Fourteen ClpP subunits assemble into 2 heptameric rings which stack back to back to give a disk-like structure with a central cavity, resembling the structure of eukaryotic proteasomes.

Its subcellular location is the cytoplasm. The enzyme catalyses Hydrolysis of proteins to small peptides in the presence of ATP and magnesium. alpha-casein is the usual test substrate. In the absence of ATP, only oligopeptides shorter than five residues are hydrolyzed (such as succinyl-Leu-Tyr-|-NHMec, and Leu-Tyr-Leu-|-Tyr-Trp, in which cleavage of the -Tyr-|-Leu- and -Tyr-|-Trp bonds also occurs).. In terms of biological role, cleaves peptides in various proteins in a process that requires ATP hydrolysis. Has a chymotrypsin-like activity. Plays a major role in the degradation of misfolded proteins. This is ATP-dependent Clp protease proteolytic subunit from Streptococcus salivarius.